The following is a 201-amino-acid chain: Sterile alpha motif domain-containing protein 12 (201 aa).

One can recognise an SAM domain in the interval 77–143; it reads WTQQDVCKWL…LQQVLQLKVR (67 aa).

The polypeptide is Sterile alpha motif domain-containing protein 12 (SAMD12) (Pongo abelii (Sumatran orangutan)).